A 451-amino-acid chain; its full sequence is Tubulin gamma-1 chain (451 aa).

142–148 contributes to the GTP binding site; that stretch reads AGGTGSG.

This sequence belongs to the tubulin family.

Its subcellular location is the cytoplasm. The protein localises to the cytoskeleton. The protein resides in the microtubule organizing center. It is found in the centrosome. It localises to the spindle. Tubulin is the major constituent of microtubules. The gamma chain is found at microtubule organizing centers (MTOC) such as the spindle poles or the centrosome, suggesting that it is involved in the minus-end nucleation of microtubule assembly. The chain is Tubulin gamma-1 chain (tubg1) from Xenopus laevis (African clawed frog).